The primary structure comprises 198 residues: UPF0301 protein BDI_1431 (198 aa).

This sequence belongs to the UPF0301 (AlgH) family.

The protein is UPF0301 protein BDI_1431 of Parabacteroides distasonis (strain ATCC 8503 / DSM 20701 / CIP 104284 / JCM 5825 / NCTC 11152).